Reading from the N-terminus, the 388-residue chain is Succinate--CoA ligase [ADP-forming] subunit beta (388 aa).

Residues 9–236 (KKLFAEHGVP…VAAVDPLEQK (228 aa)) enclose the ATP-grasp domain. ATP contacts are provided by residues Lys45, 52–54 (GRG), Glu91, Ser94, and Glu99. Positions 191 and 205 each coordinate Mg(2+). Substrate contacts are provided by residues Asn256 and 318–320 (GIT).

The protein belongs to the succinate/malate CoA ligase beta subunit family. Heterotetramer of two alpha and two beta subunits. It depends on Mg(2+) as a cofactor.

It carries out the reaction succinate + ATP + CoA = succinyl-CoA + ADP + phosphate. The catalysed reaction is GTP + succinate + CoA = succinyl-CoA + GDP + phosphate. Its pathway is carbohydrate metabolism; tricarboxylic acid cycle; succinate from succinyl-CoA (ligase route): step 1/1. In terms of biological role, succinyl-CoA synthetase functions in the citric acid cycle (TCA), coupling the hydrolysis of succinyl-CoA to the synthesis of either ATP or GTP and thus represents the only step of substrate-level phosphorylation in the TCA. The beta subunit provides nucleotide specificity of the enzyme and binds the substrate succinate, while the binding sites for coenzyme A and phosphate are found in the alpha subunit. The sequence is that of Succinate--CoA ligase [ADP-forming] subunit beta from Parafrankia sp. (strain EAN1pec).